A 244-amino-acid polypeptide reads, in one-letter code: 2,5-diamino-6-ribosylamino-4(3H)-pyrimidinone 5'-phosphate reductase (244 aa).

Residues Thr79, Asp83, Val159, and 182–186 (GANVI) each bind NADP(+).

It belongs to the HTP reductase family. In terms of assembly, homodimer.

It carries out the reaction 2,5-diamino-6-(1-D-ribitylamino)pyrimidin-4(3H)-one 5'-phosphate + NADP(+) = 2,5-diamino-6-(1-D-ribosylamino)pyrimidin-4(3H)-one 5'-phosphate + NADPH + H(+). The enzyme catalyses 2,5-diamino-6-(1-D-ribitylamino)pyrimidin-4(3H)-one 5'-phosphate + NAD(+) = 2,5-diamino-6-(1-D-ribosylamino)pyrimidin-4(3H)-one 5'-phosphate + NADH + H(+). Its pathway is cofactor biosynthesis; riboflavin biosynthesis. Functionally, catalyzes an early step in riboflavin biosynthesis, the NADPH-dependent reduction of the ribose side chain of 2,5-diamino-6-ribosylamino-4(3H)-pyrimidinone 5'-phosphate, yielding 2,5-diamino-6-ribitylamino-4(3H)-pyrimidinone 5'-phosphate. This is 2,5-diamino-6-ribosylamino-4(3H)-pyrimidinone 5'-phosphate reductase (RIB7) from Saccharomyces cerevisiae (strain ATCC 204508 / S288c) (Baker's yeast).